Reading from the N-terminus, the 344-residue chain is D-arabinose dehydrogenase [NAD(P)+] heavy chain (344 aa).

Y71 serves as the catalytic Proton donor. Position 131 (H131) interacts with substrate. At T151 the chain carries Phosphothreonine. S241–S295 lines the NADP(+) pocket.

The protein belongs to the aldo/keto reductase family. Heterodimer of a heavy chain and a light chain.

Its subcellular location is the cytoplasm. The enzyme catalyses D-arabinose + NADP(+) = D-arabinono-1,4-lactone + NADPH + H(+). It catalyses the reaction D-arabinose + NAD(+) = D-arabinono-1,4-lactone + NADH + H(+). In terms of biological role, catalyzes the oxidation of D-arabinose, L-xylose, L-fucose and L-galactose in the presence of NADP(+). This Saccharomyces cerevisiae (strain ATCC 204508 / S288c) (Baker's yeast) protein is D-arabinose dehydrogenase [NAD(P)+] heavy chain (ARA1).